We begin with the raw amino-acid sequence, 385 residues long: 8-amino-7-oxononanoate synthase (385 aa).

Residue R21 participates in substrate binding. A pyridoxal 5'-phosphate-binding site is contributed by 108-109 (GF). H133 is a binding site for substrate. The pyridoxal 5'-phosphate site is built by S179, H207, and T233. At K236 the chain carries N6-(pyridoxal phosphate)lysine. T352 is a binding site for substrate.

Belongs to the class-II pyridoxal-phosphate-dependent aminotransferase family. BioF subfamily. Homodimer. It depends on pyridoxal 5'-phosphate as a cofactor.

The catalysed reaction is 6-carboxyhexanoyl-[ACP] + L-alanine + H(+) = (8S)-8-amino-7-oxononanoate + holo-[ACP] + CO2. It functions in the pathway cofactor biosynthesis; biotin biosynthesis. Catalyzes the decarboxylative condensation of pimeloyl-[acyl-carrier protein] and L-alanine to produce 8-amino-7-oxononanoate (AON), [acyl-carrier protein], and carbon dioxide. This Salmonella paratyphi C (strain RKS4594) protein is 8-amino-7-oxononanoate synthase.